Reading from the N-terminus, the 561-residue chain is MRITIFLLLIILASAGAYAACPDWTPQQAQQEVAALENQLTRWDEAYWLHGENKVSDAVYDSMRQRLRAWQTCFALPVFNDAPVALAAGRTRHPVAHTGVQKLNDATSLSQWMHGKTDLWVQPKVDGVAVSLVYRKGKLQQVISRGDGERGEDWTARARHIPAIPLQVTGELADSVLQGELFLRQTGHRQQQDGGINARGQVAGAMMRSTVSSVLNDLDLFIWAWPDGPKAMEARLSTLAEGGFPLAQAWSKPVHSVSDVARLREQWFSEPLPFVTDGVVIREGREPPGKSWRPGEGSWVVAWKYPPAKQITEIKALRFAVGRTGKISVVAQLEPVTLDDKKVSKVSIGSLARWEKLDLAEGDQVEISLAGQGIPRLDAVIWRPTQRIKPVPPTARFDTLSCLYGTTGCEEQFISRLVWLSGKHVFDLAGMGEATWRQLSEHHHFEHLFSWLALSVDALKQTPGFSAQRAAQLWHQFNLTRQQPFQRWVKALGLPLPARDWQALTDDKWQQLQARDERSWQTLPGVGAERARQLVSYIHHPDIAALAEWLAAQRIDGFALP.

The active-site N6-AMP-lysine intermediate is K124.

Belongs to the NAD-dependent DNA ligase family. LigB subfamily.

It carries out the reaction NAD(+) + (deoxyribonucleotide)n-3'-hydroxyl + 5'-phospho-(deoxyribonucleotide)m = (deoxyribonucleotide)n+m + AMP + beta-nicotinamide D-nucleotide.. Catalyzes the formation of phosphodiester linkages between 5'-phosphoryl and 3'-hydroxyl groups in double-stranded DNA using NAD as a coenzyme and as the energy source for the reaction. The protein is DNA ligase B of Cronobacter sakazakii (strain ATCC BAA-894) (Enterobacter sakazakii).